The primary structure comprises 250 residues: ATP synthase subunit a (250 aa).

A run of 6 helical transmembrane segments spans residues 29–49 (ASLF…FATS), 84–104 (FFPL…LGMF), 114–134 (IIVT…YGFY), 143–163 (VFVP…IEII), 193–213 (FVAS…LPLI), and 216–236 (VALT…FAVL).

This sequence belongs to the ATPase A chain family. F-type ATPases have 2 components, CF(1) - the catalytic core - and CF(0) - the membrane proton channel. CF(1) has five subunits: alpha(3), beta(3), gamma(1), delta(1), epsilon(1). CF(0) has three main subunits: a(1), b(2) and c(9-12). The alpha and beta chains form an alternating ring which encloses part of the gamma chain. CF(1) is attached to CF(0) by a central stalk formed by the gamma and epsilon chains, while a peripheral stalk is formed by the delta and b chains.

The protein localises to the cell inner membrane. Key component of the proton channel; it plays a direct role in the translocation of protons across the membrane. The polypeptide is ATP synthase subunit a (Rhizobium johnstonii (strain DSM 114642 / LMG 32736 / 3841) (Rhizobium leguminosarum bv. viciae)).